We begin with the raw amino-acid sequence, 518 residues long: GMP synthase [glutamine-hydrolyzing] (518 aa).

A Glutamine amidotransferase type-1 domain is found at 13-203; the sequence is KIIVLDFGSQ…ALNVCGCKGD (191 aa). The Nucleophile role is filled by cysteine 90. Catalysis depends on residues histidine 177 and glutamate 179. The GMPS ATP-PPase domain maps to 204–393; sequence WTMENFSEVE…LGMPDAIVWR (190 aa). Residue 231-237 coordinates ATP; that stretch reads SGGVDSS.

Homodimer.

It catalyses the reaction XMP + L-glutamine + ATP + H2O = GMP + L-glutamate + AMP + diphosphate + 2 H(+). It participates in purine metabolism; GMP biosynthesis; GMP from XMP (L-Gln route): step 1/1. Catalyzes the synthesis of GMP from XMP. The chain is GMP synthase [glutamine-hydrolyzing] from Listeria welshimeri serovar 6b (strain ATCC 35897 / DSM 20650 / CCUG 15529 / CIP 8149 / NCTC 11857 / SLCC 5334 / V8).